Consider the following 521-residue polypeptide: Ribonuclease Y (521 aa).

The helical transmembrane segment at 10–30 (LIITAGVSIALAIVAFFLGYL) threads the bilayer. A KH domain is found at 210 to 270 (TVSVVTLPND…IRREIAKLTL (61 aa)). The 95-residue stretch at 336–430 (VLAHSIEVAN…IQAADSVSAA (95 aa)) folds into the HD domain.

Belongs to the RNase Y family.

The protein resides in the cell membrane. In terms of biological role, endoribonuclease that initiates mRNA decay. This Caldicellulosiruptor saccharolyticus (strain ATCC 43494 / DSM 8903 / Tp8T 6331) protein is Ribonuclease Y.